A 342-amino-acid polypeptide reads, in one-letter code: MRKDYLNSNKDSLSAPEKEIERALRPHVFADFTGQEKIVANLKIFVQAAKERKEPLDHVLLHGPPGLGKTTLAHIIANELGANIRITSGPVLDKPGDLAGLLTNLGPYDVLFIDEIHRLNPIVEEYLYTAMEDFKIDIMLDSGPSARSVQLNLNPFTLIGATTRSGLLTSPLRARFGINTRLAYYDVTLLTQIVKRSSQILNVPIEESAAYELARRSRGTPRIANTLLRRTRDFAQITGSGTITQQIAQMALKALDVDEDGLDEMDNRILSTIIEKFHGGPVGISTIATACSEESETIEEVYEPFLIQEGYLHRTPRGREATPKAYKHLKLAPPQRAGTLFE.

Residues Met-1–Tyr-185 form a large ATPase domain (RuvB-L) region. ATP contacts are provided by residues Leu-24, Arg-25, Gly-66, Lys-69, Thr-70, Thr-71, Glu-132 to Phe-134, Arg-175, Tyr-185, and Arg-222. Thr-70 provides a ligand contact to Mg(2+). Positions Asp-186–Asp-256 are small ATPAse domain (RuvB-S). Positions Glu-259–Glu-342 are head domain (RuvB-H). 2 residues coordinate DNA: Arg-314 and Arg-319.

This sequence belongs to the RuvB family. Homohexamer. Forms an RuvA(8)-RuvB(12)-Holliday junction (HJ) complex. HJ DNA is sandwiched between 2 RuvA tetramers; dsDNA enters through RuvA and exits via RuvB. An RuvB hexamer assembles on each DNA strand where it exits the tetramer. Each RuvB hexamer is contacted by two RuvA subunits (via domain III) on 2 adjacent RuvB subunits; this complex drives branch migration. In the full resolvosome a probable DNA-RuvA(4)-RuvB(12)-RuvC(2) complex forms which resolves the HJ.

It localises to the cytoplasm. The catalysed reaction is ATP + H2O = ADP + phosphate + H(+). Its function is as follows. The RuvA-RuvB-RuvC complex processes Holliday junction (HJ) DNA during genetic recombination and DNA repair, while the RuvA-RuvB complex plays an important role in the rescue of blocked DNA replication forks via replication fork reversal (RFR). RuvA specifically binds to HJ cruciform DNA, conferring on it an open structure. The RuvB hexamer acts as an ATP-dependent pump, pulling dsDNA into and through the RuvAB complex. RuvB forms 2 homohexamers on either side of HJ DNA bound by 1 or 2 RuvA tetramers; 4 subunits per hexamer contact DNA at a time. Coordinated motions by a converter formed by DNA-disengaged RuvB subunits stimulates ATP hydrolysis and nucleotide exchange. Immobilization of the converter enables RuvB to convert the ATP-contained energy into a lever motion, pulling 2 nucleotides of DNA out of the RuvA tetramer per ATP hydrolyzed, thus driving DNA branch migration. The RuvB motors rotate together with the DNA substrate, which together with the progressing nucleotide cycle form the mechanistic basis for DNA recombination by continuous HJ branch migration. Branch migration allows RuvC to scan DNA until it finds its consensus sequence, where it cleaves and resolves cruciform DNA. This is Holliday junction branch migration complex subunit RuvB from Amoebophilus asiaticus (strain 5a2).